Reading from the N-terminus, the 359-residue chain is 3-dehydroquinate synthase (359 aa).

Residues 72–77 (DGEQYK), 106–110 (GVIGD), 130–131 (TT), Lys-143, Lys-152, and 170–173 (CLKT) each bind NAD(+). Zn(2+) contacts are provided by Glu-185, His-248, and His-265.

The protein belongs to the sugar phosphate cyclases superfamily. Dehydroquinate synthase family. It depends on Co(2+) as a cofactor. Requires Zn(2+) as cofactor. The cofactor is NAD(+).

It localises to the cytoplasm. The catalysed reaction is 7-phospho-2-dehydro-3-deoxy-D-arabino-heptonate = 3-dehydroquinate + phosphate. Its pathway is metabolic intermediate biosynthesis; chorismate biosynthesis; chorismate from D-erythrose 4-phosphate and phosphoenolpyruvate: step 2/7. Its function is as follows. Catalyzes the conversion of 3-deoxy-D-arabino-heptulosonate 7-phosphate (DAHP) to dehydroquinate (DHQ). In Photobacterium profundum (strain SS9), this protein is 3-dehydroquinate synthase.